Consider the following 458-residue polypeptide: Selection and upkeep of intraepithelial T-cells protein 3 (458 aa).

A signal peptide spans 1-24 (MGSIQIIFAAYCVVLCVLQMLVLS). Topologically, residues 25 to 237 (SEQFTITGLE…ESISIVLTGD (213 aa)) are extracellular. The region spanning 26–141 (EQFTITGLER…EEHITEVKVT (116 aa)) is the Ig-like V-type domain. Cystine bridges form between C49–C123 and C163–C217. The region spanning 142–231 (ATSSDIKIIM…LLTHQEESIS (90 aa)) is the Ig-like C1-type domain. An N-linked (GlcNAc...) asparagine glycan is attached at N200. Residues 238-258 (LFSWKIDWILILSIIACVMIP) form a helical membrane-spanning segment. Topologically, residues 259 to 283 (YSMTSYLQQHLIHGSCSQRSHHWRK) are cytoplasmic. A helical transmembrane segment spans residues 284-304 (NAMVCMSSVIAIIGSMLILHL). The Extracellular portion of the chain corresponds to 305–324 (KQRVPISDQHFELDTLYLED). Residues 325-345 (ISVILCVVIVFNLKLNLLTYY) form a helical membrane-spanning segment. The Cytoplasmic portion of the chain corresponds to 346–359 (RLERKYDGCTPGCK). A helical membrane pass occupies residues 360–380 (ACFYILKIIIIILPFVFTFGC). The Extracellular segment spans residues 381 to 414 (YNAIFLKYHQLQKKVSIPDPLYYFYTSWLVNMEM). Residues 415–435 (LGVFLVFFPTFINLIEFSQFI) form a helical membrane-spanning segment. At 436–458 (KTVPKPIWLCQENMREDDAIRHR) the chain is on the cytoplasmic side.

Belongs to the SKINT family. As to expression, expressed in skin and thymus.

Its subcellular location is the membrane. Functionally, may act by engaging a cell surface molecule on immature T-cells in the embryonic thymus. The protein is Selection and upkeep of intraepithelial T-cells protein 3 (Skint3) of Mus musculus (Mouse).